We begin with the raw amino-acid sequence, 118 residues long: Large ribosomal subunit protein bL19 (118 aa).

Belongs to the bacterial ribosomal protein bL19 family.

In terms of biological role, this protein is located at the 30S-50S ribosomal subunit interface and may play a role in the structure and function of the aminoacyl-tRNA binding site. This is Large ribosomal subunit protein bL19 from Coprothermobacter proteolyticus (strain ATCC 35245 / DSM 5265 / OCM 4 / BT).